The chain runs to 510 residues: Inositol-3-phosphate synthase isozyme 2 (510 aa).

It belongs to the myo-inositol 1-phosphate synthase family. The cofactor is NAD(+). As to expression, expressed in siliques, leaves, roots, seed endosperm, but not in embryos. Highest expression in seeds. In leaves, only expressed in hydathodes and vascular tissue.

It is found in the cytoplasm. It catalyses the reaction D-glucose 6-phosphate = 1D-myo-inositol 3-phosphate. Its pathway is polyol metabolism; myo-inositol biosynthesis; myo-inositol from D-glucose 6-phosphate: step 1/2. Key enzyme in myo-inositol biosynthesis pathway that catalyzes the conversion of glucose 6-phosphate to 1-myo-inositol 1-phosphate in a NAD-dependent manner. The sequence is that of Inositol-3-phosphate synthase isozyme 2 (IPS2) from Arabidopsis thaliana (Mouse-ear cress).